Consider the following 135-residue polypeptide: Allatotropins (135 aa).

A signal peptide spans 1–22 (MNFSMHLVLAVAAAACLCVVTA). F51 is modified (phenylalanine amide). A propeptide spanning residues 55–135 (DRPHTRAELY…SSEELLRNVA (81 aa)) is cleaved from the precursor.

In terms of tissue distribution, allatotropin: Expressed in corpora cardiaca (CC), corpora allata (CA), antennal lobe (AL) and gnathal ganglion (GNG) (protein level). Expression in AL detected in all animals, expression in GNG detected in most animals and expression in CA and CC detected in few animals (at protein level). Allatotropin-PP-1: Expressed in corpora cardiaca (CC), corpora allata (CA), antennal lobe (AL) and gnathal ganglion (GNG) (at protein level). Expression in AL detected in all animals and expression in GNG, CA and CC detected in some animals (at protein level).

The protein localises to the secreted. In terms of biological role, neuropeptide stimulator of juvenile hormone synthesis. In Agrotis ipsilon (Black cutworm moth), this protein is Allatotropins.